The chain runs to 265 residues: Large ribosomal subunit protein bL9m (265 aa).

The N-terminal 49 residues, 1–49 (MAASVAPGVRTLWWAGAAWLRQGGIRELFRPRIEGSTPGRDFSLSHYQS), are a transit peptide targeting the mitochondrion.

Belongs to the bacterial ribosomal protein bL9 family. As to quaternary structure, component of the mitochondrial ribosome large subunit (39S) which comprises a 16S rRNA and about 50 distinct proteins.

Its subcellular location is the mitochondrion. The chain is Large ribosomal subunit protein bL9m (Mrpl9) from Mus musculus (Mouse).